A 301-amino-acid chain; its full sequence is Possible hemolysin C (301 aa).

CBS domains are found at residues 79 to 141 (MVPR…NFRL) and 144 to 201 (LIRK…IDDE).

Belongs to the UPF0053 family. Hemolysin C subfamily.

In Rickettsia bellii (strain RML369-C), this protein is Possible hemolysin C (tlyC).